The chain runs to 139 residues: Putative pre-16S rRNA nuclease (139 aa).

The protein belongs to the YqgF nuclease family.

The protein localises to the cytoplasm. In terms of biological role, could be a nuclease involved in processing of the 5'-end of pre-16S rRNA. The protein is Putative pre-16S rRNA nuclease of Streptococcus pyogenes serotype M3 (strain ATCC BAA-595 / MGAS315).